Consider the following 190-residue polypeptide: Shikimate kinase (190 aa).

13 to 18 (GAGKTT) serves as a coordination point for ATP. Mg(2+) is bound at residue threonine 17. Aspartate 35, arginine 59, and glycine 81 together coordinate substrate. Arginine 119 contacts ATP. Position 138 (arginine 138) interacts with substrate.

Belongs to the shikimate kinase family. Monomer. It depends on Mg(2+) as a cofactor.

It localises to the cytoplasm. The catalysed reaction is shikimate + ATP = 3-phosphoshikimate + ADP + H(+). It functions in the pathway metabolic intermediate biosynthesis; chorismate biosynthesis; chorismate from D-erythrose 4-phosphate and phosphoenolpyruvate: step 5/7. Its function is as follows. Catalyzes the specific phosphorylation of the 3-hydroxyl group of shikimic acid using ATP as a cosubstrate. In Ralstonia nicotianae (strain ATCC BAA-1114 / GMI1000) (Ralstonia solanacearum), this protein is Shikimate kinase.